The primary structure comprises 225 residues: Thymidylate kinase (225 aa).

Residue 9-16 coordinates ATP; it reads GIEGCGKT.

The protein belongs to the thymidylate kinase family.

The enzyme catalyses dTMP + ATP = dTDP + ADP. Its function is as follows. Phosphorylation of dTMP to form dTDP in both de novo and salvage pathways of dTTP synthesis. This chain is Thymidylate kinase, found in Geobacter sp. (strain M21).